A 659-amino-acid chain; its full sequence is Exoribonuclease 2 (659 aa).

The 343-residue stretch at Arg-189–Ala-531 folds into the RNB domain. Residues Asn-576–Leu-658 enclose the S1 motif domain.

This sequence belongs to the RNR ribonuclease family. RNase II subfamily.

The protein resides in the cytoplasm. The catalysed reaction is Exonucleolytic cleavage in the 3'- to 5'-direction to yield nucleoside 5'-phosphates.. Involved in mRNA degradation. Hydrolyzes single-stranded polyribonucleotides processively in the 3' to 5' direction. This is Exoribonuclease 2 from Haemophilus influenzae (strain PittGG).